A 663-amino-acid chain; its full sequence is DNA ligase 1 (663 aa).

NAD(+) is bound by residues 28–32 and 76–77; these read DKEYD and SL. K118 functions as the N6-AMP-lysine intermediate in the catalytic mechanism. NAD(+)-binding residues include R139, E173, and K310. Residues C403, C406, C419, and C425 each coordinate Zn(2+). The BRCT domain occupies 583 to 663; the sequence is VSESVFNDKT…KFEELIESVK (81 aa).

The protein belongs to the NAD-dependent DNA ligase family. LigA subfamily. Requires Mg(2+) as cofactor. The cofactor is Mn(2+).

The catalysed reaction is NAD(+) + (deoxyribonucleotide)n-3'-hydroxyl + 5'-phospho-(deoxyribonucleotide)m = (deoxyribonucleotide)n+m + AMP + beta-nicotinamide D-nucleotide.. In terms of biological role, DNA ligase that catalyzes the formation of phosphodiester linkages between 5'-phosphoryl and 3'-hydroxyl groups in double-stranded DNA using NAD as a coenzyme and as the energy source for the reaction. It is essential for DNA replication and repair of damaged DNA. The polypeptide is DNA ligase 1 (Clostridium acetobutylicum (strain ATCC 824 / DSM 792 / JCM 1419 / IAM 19013 / LMG 5710 / NBRC 13948 / NRRL B-527 / VKM B-1787 / 2291 / W)).